The sequence spans 343 residues: Delta(1)-pyrroline-2-carboxylate/Delta(1)-piperideine-2-carboxylate reductase (343 aa).

Serine 53 serves as the catalytic Charge relay system. Histidine 54 serves as the catalytic Proton donor. Arginine 58 contacts substrate. Residue 126–130 (HFAAL) participates in NADP(+) binding. Residue threonine 166 participates in substrate binding. 184–186 (DLA) serves as a coordination point for NADP(+). A substrate-binding site is contributed by 192–193 (HG). Residue aspartate 194 is the Charge relay system of the active site. Residues 236 to 237 (HK) and 309 to 315 (RLPGDRR) each bind NADP(+).

It belongs to the LDH2/MDH2 oxidoreductase family. Homodimer.

It catalyses the reaction L-pipecolate + NADP(+) = Delta(1)-piperideine-2-carboxylate + NADPH + H(+). It carries out the reaction L-proline + NADP(+) = 1-pyrroline-2-carboxylate + NADPH + H(+). The enzyme catalyses N-methyl-L-alanine + NADP(+) + H2O = methylamine + pyruvate + NADPH + H(+). With respect to regulation, is inhibited by the substrate analog pyrrole-2-carboxylate, and by 2-picolinate. Its function is as follows. Catalyzes the reduction of both Delta(1)-pyrroline-2-carboxylate (Pyr2C) and Delta(1)-piperideine-2-carboxylate (Pip2C) to L-proline and L-pipecolate, respectively, using NADPH as the electron donor. Can catalyze the reverse oxidation reactions, albeit at a much lower rate. Is also able to catalyze in vitro the NADPH-dependent formation of N-methylalanine from pyruvate and N-methylamine; can act on other alpha-keto acids and specifically uses methylamine and not ammonia for these reductive amination reactions. Can use NADH instead of NADPH, although with much less efficiency. The chain is Delta(1)-pyrroline-2-carboxylate/Delta(1)-piperideine-2-carboxylate reductase from Pseudomonas syringae pv. tomato.